The sequence spans 101 residues: Protein Tat (101 aa).

The tract at residues 1–24 (MEPVDPRLEPWKHPGSQPKTACTN) is interaction with human CREBBP. Residues 1 to 48 (MEPVDPRLEPWKHPGSQPKTACTNCYCKKCCFHCQVCFITKGLGISYG) are transactivation. Cysteine 22, cysteine 25, and cysteine 27 together coordinate Zn(2+). The segment at 22 to 37 (CTNCYCKKCCFHCQVC) is cysteine-rich. Lysine 28 carries the N6-acetyllysine; by host PCAF modification. Residues cysteine 30, histidine 33, cysteine 34, and cysteine 37 each contribute to the Zn(2+) site. Residues 38–48 (FITKGLGISYG) are core. Over residues 48–57 (GRKKRRQRRR) the composition is skewed to basic residues. The tract at residues 48 to 101 (GRKKRRQRRRAPPDSEVHQVSLPKQPASQPQGDPTGPKESKKKVERETETDPVH) is disordered. The short motif at 49–57 (RKKRRQRRR) is the Nuclear localization signal, RNA-binding (TAR), and protein transduction element. The interaction with the host capping enzyme RNGTT stretch occupies residues 49–86 (RKKRRQRRRAPPDSEVHQVSLPKQPASQPQGDPTGPKE). N6-acetyllysine; by host EP300 and GCN5L2 is present on residues lysine 50 and lysine 51. An asymmetric dimethylarginine; by host PRMT6 mark is found at arginine 52 and arginine 53. Lysine 71 is covalently cross-linked (Glycyl lysine isopeptide (Lys-Gly) (interchain with G-Cter in ubiquitin)). The span at 83-101 (GPKESKKKVERETETDPVH) shows a compositional bias: basic and acidic residues.

This sequence belongs to the lentiviruses Tat family. As to quaternary structure, interacts with host CCNT1. Associates with the P-TEFb complex composed at least of Tat, P-TEFb (CDK9 and CCNT1), TAR RNA, RNA Pol II. Recruits the HATs CREBBP, TAF1/TFIID, EP300, PCAF and GCN5L2. Interacts with host KAT5/Tip60; this interaction targets the latter to degradation. Interacts with the host deacetylase SIRT1. Interacts with host capping enzyme RNGTT; this interaction stimulates RNGTT. Binds to host KDR, and to the host integrins ITGAV/ITGB3 and ITGA5/ITGB1. Interacts with host KPNB1/importin beta-1 without previous binding to KPNA1/importin alpha-1. Interacts with EIF2AK2. Interacts with host nucleosome assembly protein NAP1L1; this interaction may be required for the transport of Tat within the nucleus, since the two proteins interact at the nuclear rim. Interacts with host C1QBP/SF2P32; this interaction involves lysine-acetylated Tat. Interacts with the host chemokine receptors CCR2, CCR3 and CXCR4. Interacts with host DPP4/CD26; this interaction may trigger an anti-proliferative effect. Interacts with host LDLR. Interacts with the host extracellular matrix metalloproteinase MMP1. Interacts with host PRMT6; this interaction mediates Tat's methylation. Interacts with, and is ubiquitinated by MDM2/Hdm2. Interacts with host PSMC3 and HTATIP2. Interacts with STAB1; this interaction may overcome SATB1-mediated repression of IL2 and IL2RA (interleukin) in T cells by binding to the same domain than HDAC1. Interacts (when acetylated) with human CDK13, thereby increasing HIV-1 mRNA splicing and promoting the production of the doubly spliced HIV-1 protein Nef. Interacts with host TBP; this interaction modulates the activity of transcriptional pre-initiation complex. Interacts with host RELA. Interacts with host PLSCR1; this interaction negatively regulates Tat transactivation activity by altering its subcellular distribution. In terms of processing, asymmetrical arginine methylation by host PRMT6 seems to diminish the transactivation capacity of Tat and affects the interaction with host CCNT1. Acetylation by EP300, CREBBP, GCN5L2/GCN5 and PCAF regulates the transactivation activity of Tat. EP300-mediated acetylation of Lys-50 promotes dissociation of Tat from the TAR RNA through the competitive binding to PCAF's bromodomain. In addition, the non-acetylated Tat's N-terminus can also interact with PCAF. PCAF-mediated acetylation of Lys-28 enhances Tat's binding to CCNT1. Lys-50 is deacetylated by SIRT1. Post-translationally, polyubiquitination by host MDM2 does not target Tat to degradation, but activates its transactivation function and fosters interaction with CCNT1 and TAR RNA. In terms of processing, phosphorylated by EIF2AK2 on serine and threonine residues adjacent to the basic region important for TAR RNA binding and function. Phosphorylation of Tat by EIF2AK2 is dependent on the prior activation of EIF2AK2 by dsRNA.

It localises to the host nucleus. The protein localises to the host nucleolus. It is found in the host cytoplasm. The protein resides in the secreted. In terms of biological role, transcriptional activator that increases RNA Pol II processivity, thereby increasing the level of full-length viral transcripts. Recognizes a hairpin structure at the 5'-LTR of the nascent viral mRNAs referred to as the transactivation responsive RNA element (TAR) and recruits the cyclin T1-CDK9 complex (P-TEFb complex) that will in turn hyperphosphorylate the RNA polymerase II to allow efficient elongation. The CDK9 component of P-TEFb and other Tat-activated kinases hyperphosphorylate the C-terminus of RNA Pol II that becomes stabilized and much more processive. Other factors such as HTATSF1/Tat-SF1, SUPT5H/SPT5, and HTATIP2 are also important for Tat's function. Besides its effect on RNA Pol II processivity, Tat induces chromatin remodeling of proviral genes by recruiting the histone acetyltransferases (HATs) CREBBP, EP300 and PCAF to the chromatin. This also contributes to the increase in proviral transcription rate, especially when the provirus integrates in transcriptionally silent region of the host genome. To ensure maximal activation of the LTR, Tat mediates nuclear translocation of NF-kappa-B by interacting with host RELA. Through its interaction with host TBP, Tat may also modulate transcription initiation. Tat can reactivate a latently infected cell by penetrating in it and transactivating its LTR promoter. In the cytoplasm, Tat is thought to act as a translational activator of HIV-1 mRNAs. Extracellular circulating Tat can be endocytosed by surrounding uninfected cells via the binding to several surface receptors such as CD26, CXCR4, heparan sulfate proteoglycans (HSPG) or LDLR. Neurons are rarely infected, but they internalize Tat via their LDLR. Through its interaction with nuclear HATs, Tat is potentially able to control the acetylation-dependent cellular gene expression. Modulates the expression of many cellular genes involved in cell survival, proliferation or in coding for cytokines or cytokine receptors. Tat plays a role in T-cell and neurons apoptosis. Tat induced neurotoxicity and apoptosis probably contribute to neuroAIDS. Circulating Tat also acts as a chemokine-like and/or growth factor-like molecule that binds to specific receptors on the surface of the cells, affecting many cellular pathways. In the vascular system, Tat binds to ITGAV/ITGB3 and ITGA5/ITGB1 integrins dimers at the surface of endothelial cells and competes with bFGF for heparin-binding sites, leading to an excess of soluble bFGF. The protein is Protein Tat of Human immunodeficiency virus type 1 group M subtype B (isolate SF162) (HIV-1).